Reading from the N-terminus, the 410-residue chain is Argininosuccinate synthase (410 aa).

8–16 (AYSGGLDTS) is a binding site for ATP. Tyr-86 serves as a coordination point for L-citrulline. An ATP-binding site is contributed by Gly-116. Residues Thr-118, Asn-122, and Asp-123 each contribute to the L-aspartate site. Asn-122 provides a ligand contact to L-citrulline. The L-citrulline site is built by Arg-126, Ser-174, Glu-259, and Tyr-271.

It belongs to the argininosuccinate synthase family. Type 1 subfamily. Homotetramer.

The protein resides in the cytoplasm. It carries out the reaction L-citrulline + L-aspartate + ATP = 2-(N(omega)-L-arginino)succinate + AMP + diphosphate + H(+). The protein operates within amino-acid biosynthesis; L-arginine biosynthesis; L-arginine from L-ornithine and carbamoyl phosphate: step 2/3. This chain is Argininosuccinate synthase, found in Leuconostoc citreum (strain KM20).